We begin with the raw amino-acid sequence, 393 residues long: Ornithine decarboxylase 2 (393 aa).

At Lys-62 the chain carries N6-(pyridoxal phosphate)lysine. Pyridoxal 5'-phosphate contacts are provided by residues Ser-194, Gly-231, and 265–268 (EPGR). Residue 314–315 (YY) participates in substrate binding. Catalysis depends on Cys-343, which acts as the Proton donor; shared with dimeric partner. Asp-344 provides a ligand contact to substrate. Pyridoxal 5'-phosphate is bound at residue Tyr-371.

This sequence belongs to the Orn/Lys/Arg decarboxylase class-II family. As to quaternary structure, homodimer. Only the dimer is catalytically active, as the active sites are constructed of residues from both monomers. It depends on pyridoxal 5'-phosphate as a cofactor.

The catalysed reaction is L-ornithine + H(+) = putrescine + CO2. The protein operates within amine and polyamine biosynthesis; putrescine biosynthesis via L-ornithine pathway; putrescine from L-ornithine: step 1/1. Its activity is regulated as follows. Inhibited by antizyme (AZ) in response to polyamine levels. AZ inhibits the assembly of the functional homodimer by binding to ODC monomers and targeting them for ubiquitin-independent proteolytic destruction by the 26S proteasome. In terms of biological role, catalyzes the first and rate-limiting step of polyamine biosynthesis that converts ornithine into putrescine, which is the precursor for the polyamines, spermidine and spermine. Polyamines are essential for cell proliferation and are implicated in cellular processes, ranging from DNA replication to apoptosis. This chain is Ornithine decarboxylase 2 (Odc2), found in Drosophila melanogaster (Fruit fly).